We begin with the raw amino-acid sequence, 350 residues long: Phenylalanine--tRNA ligase alpha subunit (350 aa).

E271 lines the Mg(2+) pocket.

This sequence belongs to the class-II aminoacyl-tRNA synthetase family. Phe-tRNA synthetase alpha subunit type 1 subfamily. In terms of assembly, tetramer of two alpha and two beta subunits. Requires Mg(2+) as cofactor.

The protein localises to the cytoplasm. The catalysed reaction is tRNA(Phe) + L-phenylalanine + ATP = L-phenylalanyl-tRNA(Phe) + AMP + diphosphate + H(+). This is Phenylalanine--tRNA ligase alpha subunit from Delftia acidovorans (strain DSM 14801 / SPH-1).